Here is a 526-residue protein sequence, read N- to C-terminus: tRNA-2-methylthio-N(6)-dimethylallyladenosine synthase (526 aa).

A disordered region spans residues 1–24; it reads MTQQLNHAKVNQHPGQATLPETAE. In terms of domain architecture, MTTase N-terminal spans 28-144; sequence RTYEVKTYGC…LPTLLQRAEH (117 aa). The [4Fe-4S] cluster site is built by Cys37, Cys73, Cys107, Cys181, Cys185, and Cys188. In terms of domain architecture, Radical SAM core spans 167–403; that stretch reads RESAYAGWVS…MVVQEQVCEE (237 aa). The TRAM domain occupies 406–477; the sequence is QKLIGTTVEL…PFFLIADSGV (72 aa).

This sequence belongs to the methylthiotransferase family. MiaB subfamily. Monomer. [4Fe-4S] cluster serves as cofactor.

The protein localises to the cytoplasm. The catalysed reaction is N(6)-dimethylallyladenosine(37) in tRNA + (sulfur carrier)-SH + AH2 + 2 S-adenosyl-L-methionine = 2-methylsulfanyl-N(6)-dimethylallyladenosine(37) in tRNA + (sulfur carrier)-H + 5'-deoxyadenosine + L-methionine + A + S-adenosyl-L-homocysteine + 2 H(+). Catalyzes the methylthiolation of N6-(dimethylallyl)adenosine (i(6)A), leading to the formation of 2-methylthio-N6-(dimethylallyl)adenosine (ms(2)i(6)A) at position 37 in tRNAs that read codons beginning with uridine. This is tRNA-2-methylthio-N(6)-dimethylallyladenosine synthase from Corynebacterium glutamicum (strain R).